Consider the following 167-residue polypeptide: uncharacterized protein (167 aa).

A helical membrane pass occupies residues Ile4–Asp24.

It is found in the membrane. This is an uncharacterized protein from Rickettsia prowazekii (strain Madrid E).